A 464-amino-acid polypeptide reads, in one-letter code: Soluble pyridine nucleotide transhydrogenase (464 aa).

35–44 (DSRRVVGGNC) is a binding site for FAD.

Belongs to the class-I pyridine nucleotide-disulfide oxidoreductase family. Requires FAD as cofactor.

The protein resides in the cytoplasm. The catalysed reaction is NAD(+) + NADPH = NADH + NADP(+). Conversion of NADPH, generated by peripheral catabolic pathways, to NADH, which can enter the respiratory chain for energy generation. The polypeptide is Soluble pyridine nucleotide transhydrogenase (Pseudomonas paraeruginosa (strain DSM 24068 / PA7) (Pseudomonas aeruginosa (strain PA7))).